The chain runs to 711 residues: Polyribonucleotide nucleotidyltransferase (711 aa).

Mg(2+) is bound by residues D486 and D492. The KH domain maps to 553 to 612; the sequence is PRIHTIKINPDKIKDVIGKGGSVIRALTEETGTTIEIEDDGTVKIAATDGEKAKHAIRRI. Positions 622-690 constitute an S1 motif domain; sequence GRIYNGKVTR…RQGRVRLSIK (69 aa). The segment at 690 to 711 is disordered; the sequence is KEATEQSQPAAAPEAPAAEQGE. Residues 694–711 show a composition bias toward low complexity; the sequence is EQSQPAAAPEAPAAEQGE.

The protein belongs to the polyribonucleotide nucleotidyltransferase family. In terms of assembly, component of the RNA degradosome, which is a multiprotein complex involved in RNA processing and mRNA degradation. Requires Mg(2+) as cofactor.

The protein resides in the cytoplasm. The catalysed reaction is RNA(n+1) + phosphate = RNA(n) + a ribonucleoside 5'-diphosphate. Its function is as follows. Involved in mRNA degradation. Catalyzes the phosphorolysis of single-stranded polyribonucleotides processively in the 3'- to 5'-direction. This chain is Polyribonucleotide nucleotidyltransferase, found in Citrobacter koseri (strain ATCC BAA-895 / CDC 4225-83 / SGSC4696).